We begin with the raw amino-acid sequence, 187 residues long: Probable chemoreceptor glutamine deamidase CheD (187 aa).

The segment at 164–187 (APQDVRRPTPPPMPAVASGDVDLF) is disordered.

This sequence belongs to the CheD family.

The catalysed reaction is L-glutaminyl-[protein] + H2O = L-glutamyl-[protein] + NH4(+). Probably deamidates glutamine residues to glutamate on methyl-accepting chemotaxis receptors (MCPs), playing an important role in chemotaxis. The chain is Probable chemoreceptor glutamine deamidase CheD from Caulobacter vibrioides (strain ATCC 19089 / CIP 103742 / CB 15) (Caulobacter crescentus).